A 137-amino-acid polypeptide reads, in one-letter code: Small ribosomal subunit protein uS12 (137 aa).

The protein belongs to the universal ribosomal protein uS12 family. As to quaternary structure, part of the 30S ribosomal subunit. Contacts proteins S8 and S17. May interact with IF1 in the 30S initiation complex.

With S4 and S5 plays an important role in translational accuracy. Functionally, interacts with and stabilizes bases of the 16S rRNA that are involved in tRNA selection in the A site and with the mRNA backbone. Located at the interface of the 30S and 50S subunits, it traverses the body of the 30S subunit contacting proteins on the other side and probably holding the rRNA structure together. The combined cluster of proteins S8, S12 and S17 appears to hold together the shoulder and platform of the 30S subunit. The sequence is that of Small ribosomal subunit protein uS12 from Lactiplantibacillus plantarum (strain ATCC BAA-793 / NCIMB 8826 / WCFS1) (Lactobacillus plantarum).